The sequence spans 436 residues: D-aminoacyl-tRNA deacylase (436 aa).

Belongs to the DtdA deacylase family. In terms of assembly, monomer. Zn(2+) serves as cofactor.

It carries out the reaction a D-aminoacyl-tRNA + H2O = a tRNA + a D-alpha-amino acid + H(+). The catalysed reaction is glycyl-tRNA(Ala) + H2O = tRNA(Ala) + glycine + H(+). Its function is as follows. D-aminoacyl-tRNA deacylase with broad substrate specificity. By recycling D-aminoacyl-tRNA to D-amino acids and free tRNA molecules, this enzyme counteracts the toxicity associated with the formation of D-aminoacyl-tRNA entities in vivo. This Methanoregula boonei (strain DSM 21154 / JCM 14090 / 6A8) protein is D-aminoacyl-tRNA deacylase.